The chain runs to 1372 residues: Disease resistance protein RRS1B (1372 aa).

The region spanning 2–137 (TESEQIVYIS…ETVRDVYEKL (136 aa)) is the TIR domain. Residues 166–417 (VGIWGMPGIG…GCGFFPHVGI (252 aa)) enclose the NB-ARC domain. 170-177 (GMPGIGKT) contributes to the ATP binding site. An LRR 1 repeat occupies 491-515 (PEEIEGMFLDTSNLSFDIKHVAFDN). Residues 528–544 (NPEVHHVNNFLKGSLSS) form an LRR 2; degenerate repeat. 10 LRR repeats span residues 545-568 (LPNV…NFDP), 570-591 (HLVE…TKDL), 614-637 (AQNL…TGQL), 638-658 (LHLR…PEIP), 659-681 (PNIE…IVKP), 693-718 (IPGL…KIST), 723-747 (PGKL…VNLE), 749-767 (LKAL…QGFP), 768-792 (RNLK…SLEF), and 798-823 (CVSL…CFDL). A Nuclear localization signal motif is present at residues 950-964 (INLHCWALGKAVERD). Positions 1174-1240 (DRGSRSSDLW…YISEHNHPFP (67 aa)) form a DNA-binding region, WRKY. Disordered stretches follow at residues 1246-1288 (LAGS…ASPP) and 1337-1372 (QTMF…ILNR). A compositionally biased stretch (low complexity) spans 1249-1269 (STRSSSSKCSDVTTSASSTVS). Positions 1270-1279 (QDKEGPDKSH) are enriched in basic and acidic residues. Residues 1337–1348 (QTMFLSRRSSGG) are compositionally biased toward polar residues.

This sequence belongs to the disease resistance TIR-NB-LRR family. In terms of assembly, interacts with RPS4B. RPS4B-RRS1B heterodimer interacts with the bacterial effectors AvrRps4 and PopP2.

It is found in the nucleus. Functionally, transcription factor. Interacts specifically with the W box (5'-(T)TGAC[CT]-3'), a frequently occurring elicitor-responsive cis-acting element. Also acts as a disease resistance protein that specifically recognizes the AvrRps4 type III effector avirulence protein from P.syringae. Heterodimerization with RPS4B is required to form a functional complex to recognize AvrRps4 and to mediate the hypersensitive response. The chain is Disease resistance protein RRS1B from Arabidopsis thaliana (Mouse-ear cress).